We begin with the raw amino-acid sequence, 216 residues long: Glycerol-3-phosphate acyltransferase (216 aa).

The next 5 membrane-spanning stretches (helical) occupy residues 4–24, 56–76, 80–100, 112–132, and 138–158; these read IALG…AILV, VAVL…AYLL, PLYL…PVFF, FGAI…TWLL, and GYSS…VWWF.

Belongs to the PlsY family. Probably interacts with PlsX.

It localises to the cell inner membrane. The catalysed reaction is an acyl phosphate + sn-glycerol 3-phosphate = a 1-acyl-sn-glycero-3-phosphate + phosphate. It functions in the pathway lipid metabolism; phospholipid metabolism. In terms of biological role, catalyzes the transfer of an acyl group from acyl-phosphate (acyl-PO(4)) to glycerol-3-phosphate (G3P) to form lysophosphatidic acid (LPA). This enzyme utilizes acyl-phosphate as fatty acyl donor, but not acyl-CoA or acyl-ACP. The chain is Glycerol-3-phosphate acyltransferase from Yersinia pseudotuberculosis serotype O:1b (strain IP 31758).